A 90-amino-acid chain; its full sequence is Small ribosomal subunit protein uS15 (90 aa).

It belongs to the universal ribosomal protein uS15 family. As to quaternary structure, part of the 30S ribosomal subunit. Forms a bridge to the 50S subunit in the 70S ribosome, contacting the 23S rRNA.

Functionally, one of the primary rRNA binding proteins, it binds directly to 16S rRNA where it helps nucleate assembly of the platform of the 30S subunit by binding and bridging several RNA helices of the 16S rRNA. In terms of biological role, forms an intersubunit bridge (bridge B4) with the 23S rRNA of the 50S subunit in the ribosome. This chain is Small ribosomal subunit protein uS15, found in Herpetosiphon aurantiacus (strain ATCC 23779 / DSM 785 / 114-95).